We begin with the raw amino-acid sequence, 64 residues long: Large ribosomal subunit protein bL35 (64 aa).

The protein belongs to the bacterial ribosomal protein bL35 family.

The polypeptide is Large ribosomal subunit protein bL35 (Ectopseudomonas mendocina (strain ymp) (Pseudomonas mendocina)).